A 334-amino-acid polypeptide reads, in one-letter code: Eukaryotic translation initiation factor 3 subunit H (334 aa).

The 133-residue stretch at 20 to 152 (VQCDGLAAMK…LKAYRLTPQA (133 aa)) folds into the MPN domain.

The protein belongs to the eIF-3 subunit H family. As to quaternary structure, component of the eukaryotic translation initiation factor 3 (eIF-3) complex.

It localises to the cytoplasm. Its function is as follows. Component of the eukaryotic translation initiation factor 3 (eIF-3) complex, which is involved in protein synthesis of a specialized repertoire of mRNAs and, together with other initiation factors, stimulates binding of mRNA and methionyl-tRNAi to the 40S ribosome. The eIF-3 complex specifically targets and initiates translation of a subset of mRNAs involved in cell proliferation. The protein is Eukaryotic translation initiation factor 3 subunit H of Anopheles gambiae (African malaria mosquito).